Consider the following 536-residue polypeptide: Apolipoprotein N-acyltransferase (536 aa).

Helical transmembrane passes span 34-54 (PLWW…RPGA), 64-84 (ALIG…WLFI), 89-109 (YGAL…AFLA), 129-149 (GAAL…GSLW), 172-192 (YVGV…CVQW), and 199-219 (HWPM…AAVQ). Positions 244–487 (LQGNIAQDEK…RGVLRGQVHG (244 aa)) constitute a CN hydrolase domain. Residue glutamate 283 is the Proton acceptor of the active site. The active site involves lysine 345. The active-site Nucleophile is the cysteine 395. A helical transmembrane segment spans residues 503–523 (WWVARWGLWPLWALAALALAW).

Belongs to the CN hydrolase family. Apolipoprotein N-acyltransferase subfamily.

Its subcellular location is the cell inner membrane. It catalyses the reaction N-terminal S-1,2-diacyl-sn-glyceryl-L-cysteinyl-[lipoprotein] + a glycerophospholipid = N-acyl-S-1,2-diacyl-sn-glyceryl-L-cysteinyl-[lipoprotein] + a 2-acyl-sn-glycero-3-phospholipid + H(+). It participates in protein modification; lipoprotein biosynthesis (N-acyl transfer). Its function is as follows. Catalyzes the phospholipid dependent N-acylation of the N-terminal cysteine of apolipoprotein, the last step in lipoprotein maturation. The protein is Apolipoprotein N-acyltransferase of Verminephrobacter eiseniae (strain EF01-2).